Consider the following 129-residue polypeptide: UPF0344 protein SSP1805 (129 aa).

4 consecutive transmembrane segments (helical) span residues 1–21 (MLHM…AAYF), 36–56 (IHML…WVWI), 68–88 (MLLT…EVTI), and 100–120 (LMWT…ILPM).

Belongs to the UPF0344 family.

It is found in the cell membrane. The chain is UPF0344 protein SSP1805 from Staphylococcus saprophyticus subsp. saprophyticus (strain ATCC 15305 / DSM 20229 / NCIMB 8711 / NCTC 7292 / S-41).